A 512-amino-acid chain; its full sequence is Cytochrome P450 monooxygenase astB (512 aa).

Residues Asp5 to Ala25 traverse the membrane as a helical segment. Cys452 contacts heme.

It belongs to the cytochrome P450 family. It depends on heme as a cofactor.

The protein resides in the membrane. Its pathway is secondary metabolite biosynthesis; terpenoid biosynthesis. In terms of biological role, cytochrome P450 monooxygenase; part of the gene cluster that mediates the biosynthesis of the sesquiterpenoid aspterric acid (AA), an inhibitor of dihydroxy-acid dehydratase (DHAD) effective as an herbicide. AstB catalyzes the second step within the pathway and converts (-)-daucane produced by the terpene cyclase astA into an alpha-epoxy carboxylate intermediate which is further converted into the tricyclic aspterric acid by the cytochrome P450 monooxygenase astC. The polypeptide is Cytochrome P450 monooxygenase astB (Aspergillus terreus (strain NIH 2624 / FGSC A1156)).